The sequence spans 186 residues: Mediator of RNA polymerase II transcription subunit 10a (186 aa).

It belongs to the Mediator complex subunit 10 family. As to quaternary structure, mono-, di- and oligomers. Component of the Mediator complex. Interacts with GEBPL.

It localises to the nucleus. Component of the Mediator complex, a coactivator involved in the regulated transcription of nearly all RNA polymerase II-dependent genes. Mediator functions as a bridge to convey information from gene-specific regulatory proteins to the basal RNA polymerase II transcription machinery. The Mediator complex, having a compact conformation in its free form, is recruited to promoters by direct interactions with regulatory proteins and serves for the assembly of a functional pre-initiation complex with RNA polymerase II and the general transcription factors. This chain is Mediator of RNA polymerase II transcription subunit 10a, found in Arabidopsis thaliana (Mouse-ear cress).